A 108-amino-acid polypeptide reads, in one-letter code: Replication restart protein PriB (108 aa).

Residues 8 to 108 (IDNRFSVMGV…LHAEQIEFID (101 aa)) form the SSB domain.

Belongs to the PriB family. In terms of assembly, homodimer. Interacts with PriA and DnaT. Component of the replication restart primosome. Primosome assembly occurs via a 'hand-off' mechanism. PriA binds to replication forks, subsequently PriB then DnaT bind; DnaT then displaces ssDNA to generate the helicase loading substrate.

In terms of biological role, involved in the restart of stalled replication forks, which reloads the replicative helicase on sites other than the origin of replication; the PriA-PriB pathway is the major replication restart pathway. During primosome assembly it facilitates complex formation between PriA and DnaT on DNA; stabilizes PriA on DNA. Stimulates the DNA unwinding activity of PriA helicase. The sequence is that of Replication restart protein PriB from Haemophilus influenzae (strain 86-028NP).